Reading from the N-terminus, the 302-residue chain is Recombination-associated protein RdgC (302 aa).

The protein belongs to the RdgC family.

Its subcellular location is the cytoplasm. It localises to the nucleoid. In terms of biological role, may be involved in recombination. This chain is Recombination-associated protein RdgC, found in Halorhodospira halophila (strain DSM 244 / SL1) (Ectothiorhodospira halophila (strain DSM 244 / SL1)).